The chain runs to 96 residues: Large ribosomal subunit protein uL23 (96 aa).

It belongs to the universal ribosomal protein uL23 family. As to quaternary structure, part of the 50S ribosomal subunit. Contacts protein L29, and trigger factor when it is bound to the ribosome.

Functionally, one of the early assembly proteins it binds 23S rRNA. One of the proteins that surrounds the polypeptide exit tunnel on the outside of the ribosome. Forms the main docking site for trigger factor binding to the ribosome. The protein is Large ribosomal subunit protein uL23 of Clostridioides difficile (strain 630) (Peptoclostridium difficile).